The following is a 500-amino-acid chain: Glycerol kinase (500 aa).

An ADP-binding site is contributed by T16. ATP is bound by residues T16 and T17. Position 16 (T16) interacts with sn-glycerol 3-phosphate. R20 is an ADP binding site. Sn-glycerol 3-phosphate contacts are provided by R86, E87, Y138, and D243. Residues R86, E87, Y138, D243, and Q244 each contribute to the glycerol site. ADP is bound by residues T265 and G313. T265, G313, Q317, and G414 together coordinate ATP. Residues G414 and N418 each coordinate ADP.

The protein belongs to the FGGY kinase family.

It catalyses the reaction glycerol + ATP = sn-glycerol 3-phosphate + ADP + H(+). The protein operates within polyol metabolism; glycerol degradation via glycerol kinase pathway; sn-glycerol 3-phosphate from glycerol: step 1/1. With respect to regulation, inhibited by fructose 1,6-bisphosphate (FBP). Its function is as follows. Key enzyme in the regulation of glycerol uptake and metabolism. Catalyzes the phosphorylation of glycerol to yield sn-glycerol 3-phosphate. In Nostoc sp. (strain PCC 7120 / SAG 25.82 / UTEX 2576), this protein is Glycerol kinase.